The sequence spans 178 residues: Actin-related protein 2/3 complex subunit 3 (178 aa).

A Glycyl lysine isopeptide (Lys-Gly) (interchain with G-Cter in ubiquitin) cross-link involves residue Lys29.

The protein belongs to the ARPC3 family. Component of the Arp2/3 complex composed of ARP2, ARP3, ARC40/p41-ARC, ARC35/p34-ARC, ARC18/p21-ARC, ARC19/p20-ARC and ARC16/p16-ARC.

Its subcellular location is the cytoplasm. It is found in the cytoskeleton. Functionally, functions as a component of the Arp2/3 complex which is involved in regulation of actin polymerization and together with an activating nucleation-promoting factor (NPF) mediates the formation of branched actin networks. The protein is Actin-related protein 2/3 complex subunit 3 (ARC18) of Saccharomyces cerevisiae (strain ATCC 204508 / S288c) (Baker's yeast).